The primary structure comprises 464 residues: Tyrosine aminotransferase (464 aa).

Lys-284 carries the N6-(pyridoxal phosphate)lysine modification.

The protein belongs to the class-I pyridoxal-phosphate-dependent aminotransferase family. Homodimer. It depends on pyridoxal 5'-phosphate as a cofactor. In terms of tissue distribution, expressed in the muscle. Expressed in the hypodermis and intestine.

The catalysed reaction is L-tyrosine + 2-oxoglutarate = 3-(4-hydroxyphenyl)pyruvate + L-glutamate. The enzyme catalyses 3-hydroxy-L-phenylalanine + 2-oxoglutarate = 3-(3-hydroxyphenyl)pyruvate + L-glutamate. Its pathway is amino-acid degradation; L-phenylalanine degradation; acetoacetate and fumarate from L-phenylalanine: step 2/6. Functionally, transaminase involved in tyrosine breakdown. Converts tyrosine to p-hydroxyphenylpyruvate. Has no transaminase activity towards phenylalanine. Plays protective role against oxidative stress, metabolizing meta-tyrosine and negatively regulating its accumulation. Plays a role in modulating the daf-2/insulin receptor-like transduction pathway through regulating tyrosine levels. Negatively regulates dauer formation. Plays a role in longevity. The polypeptide is Tyrosine aminotransferase (Caenorhabditis elegans).